The chain runs to 42 residues: Profilin (42 aa).

This sequence belongs to the profilin family. Occurs in many kinds of cells as a complex with monomeric actin in a 1:1 ratio.

Its subcellular location is the cytoplasm. The protein resides in the cytoskeleton. Binds to actin and affects the structure of the cytoskeleton. At high concentrations, profilin prevents the polymerization of actin, whereas it enhances it at low concentrations. This Plantago lanceolata (English plantain) protein is Profilin.